Consider the following 46-residue polypeptide: uncharacterized protein (46 aa).

This is an uncharacterized protein from Bacillus subtilis (strain 168).